The following is a 195-amino-acid chain: MPIGVPKVPFRLPGEPSAQWVDLYNRLYRERVLFLCQDLDDELANQLIGIMLYLNAEEKSKDLYIYINSPGGSVTCGIAVYDTMNYIKADVTTICVGTAASMASFVLAGGTQGKRIALPHSRIMIHQPEGGSRGQASEVLSESEEVMRIRRQVGKIYAQRTGQPLRRISRDLDRDQFLSAREAKDYGIVDQVATS.

The Nucleophile role is filled by S101. The active site involves H126.

The protein belongs to the peptidase S14 family. In terms of assembly, component of the chloroplastic Clp protease core complex.

Its subcellular location is the plastid. The protein resides in the chloroplast stroma. It carries out the reaction Hydrolysis of proteins to small peptides in the presence of ATP and magnesium. alpha-casein is the usual test substrate. In the absence of ATP, only oligopeptides shorter than five residues are hydrolyzed (such as succinyl-Leu-Tyr-|-NHMec, and Leu-Tyr-Leu-|-Tyr-Trp, in which cleavage of the -Tyr-|-Leu- and -Tyr-|-Trp bonds also occurs).. Cleaves peptides in various proteins in a process that requires ATP hydrolysis. Has a chymotrypsin-like activity. Plays a major role in the degradation of misfolded proteins. The chain is ATP-dependent Clp protease proteolytic subunit from Oltmannsiellopsis viridis (Marine flagellate).